The primary structure comprises 239 residues: MNNTPPIIALDFASAQETYAFLDRFQGEELFVKVGMELFYQEGPAILENLQERGCRIFLDLKCHDIPTTVYKAMKRLAGFGVSLVNVHAAGGKQMMESALEGLEAGTPAGQKRPSLIAVTQLTSTSSEMLQRELLIETPLLDTVVHYSRLAEESGLDGVVCSVHEAEHIYRAVSVDFLTVTPGIRMADDKNNDQVRVATPGYAREKGVSAIVVGRSITQAEDPVSAYRRIGHEWEGTKA.

Substrate contacts are provided by residues D11, K33, 60 to 69 (DLKCHDIPTT), T123, R185, Q194, G214, and R215. K62 (proton donor) is an active-site residue.

The protein belongs to the OMP decarboxylase family. Type 1 subfamily. Homodimer.

It catalyses the reaction orotidine 5'-phosphate + H(+) = UMP + CO2. Its pathway is pyrimidine metabolism; UMP biosynthesis via de novo pathway; UMP from orotate: step 2/2. Catalyzes the decarboxylation of orotidine 5'-monophosphate (OMP) to uridine 5'-monophosphate (UMP). This is Orotidine 5'-phosphate decarboxylase from Bacillus licheniformis (strain ATCC 14580 / DSM 13 / JCM 2505 / CCUG 7422 / NBRC 12200 / NCIMB 9375 / NCTC 10341 / NRRL NRS-1264 / Gibson 46).